Reading from the N-terminus, the 444-residue chain is C4-dicarboxylate transport protein (444 aa).

The next 8 helical transmembrane spans lie at 19–39, 55–75, 90–110, 161–181, 199–219, 230–250, 343–363, and 366–386; these read HLYF…HFYP, LVKM…IAGM, IYFL…SNIL, ILQV…VGDL, LVAI…AFTI, LAFL…VVLG, LLLV…AGFI, and AATL…ILGI.

The protein belongs to the dicarboxylate/amino acid:cation symporter (DAACS) (TC 2.A.23) family.

It is found in the cell inner membrane. Its function is as follows. Responsible for the transport of dicarboxylates such as succinate, fumarate, and malate from the periplasm across the membrane. This is C4-dicarboxylate transport protein from Allorhizobium ampelinum (strain ATCC BAA-846 / DSM 112012 / S4) (Agrobacterium vitis (strain S4)).